Reading from the N-terminus, the 236-residue chain is Ribonuclease PH (236 aa).

Residues arginine 86 and 124-126 (GTR) each bind phosphate.

The protein belongs to the RNase PH family. In terms of assembly, homohexameric ring arranged as a trimer of dimers.

The catalysed reaction is tRNA(n+1) + phosphate = tRNA(n) + a ribonucleoside 5'-diphosphate. Functionally, phosphorolytic 3'-5' exoribonuclease that plays an important role in tRNA 3'-end maturation. Removes nucleotide residues following the 3'-CCA terminus of tRNAs; can also add nucleotides to the ends of RNA molecules by using nucleoside diphosphates as substrates, but this may not be physiologically important. Probably plays a role in initiation of 16S rRNA degradation (leading to ribosome degradation) during starvation. This chain is Ribonuclease PH, found in Thermodesulfovibrio yellowstonii (strain ATCC 51303 / DSM 11347 / YP87).